The chain runs to 876 residues: Serrate RNA effector molecule homolog (876 aa).

The interval 1 to 90 (MGDSDDEYDR…RRDWDEHSSD (90 aa)) is disordered. Residue Gly-2 is modified to N-acetylglycine. The residue at position 4 (Ser-4) is a Phosphoserine. The residue at position 8 (Tyr-8) is a Phosphotyrosine. Basic and acidic residues predominate over residues 8–73 (YDRRRRDKFR…ERFSPPRHEL (66 aa)). Phosphoserine is present on residues Ser-67, Ser-74, and Ser-136. Lys-150 participates in a covalent cross-link: Glycyl lysine isopeptide (Lys-Gly) (interchain with G-Cter in SUMO2). The disordered stretch occupies residues 271–412 (EEEEEQAGKP…KPKDAAGLEC (142 aa)). The segment covering 297–347 (DGERKTNDKDEKKEDGKQAENDSSNDDKTKKSEGDGDKEEKKEDSEKEAKK) has biased composition (basic and acidic residues). Acidic residues predominate over residues 370-387 (SESESESGQAEEEKEEAE). Positions 388-412 (EALKEKEKPKEEEWEKPKDAAGLEC) are enriched in basic and acidic residues. Ser-493 and Ser-540 each carry phosphoserine. A Phosphothreonine modification is found at Thr-544. Ser-570 is subject to Phosphoserine. The segment at 575–598 (ELLGSSGGAPPEEPPKEGNPAEIN) is disordered. Thr-671 bears the Phosphothreonine mark. At Ser-679 the chain carries Phosphoserine. 3 positions are modified to omega-N-methylarginine: Arg-833, Arg-840, and Arg-850. The interval 835–854 (NYDAFRGQGGYPGKPRNRMV) is disordered.

The protein belongs to the ARS2 family. As to quaternary structure, interacts with NCBP1 and DROSHA. Interacts with CASP8AP2 and ERBB4. Interacts with LUZP4. Interacts with NCBP2/CBP20 and NCBP3. Interacts with MTREX. In terms of tissue distribution, ubiquitously expressed.

The protein resides in the nucleus. It localises to the nucleoplasm. It is found in the cytoplasm. Functionally, acts as a mediator between the cap-binding complex (CBC) and the primary microRNAs (miRNAs) processing machinery during cell proliferation. Contributes to the stability and delivery of capped primary miRNA transcripts to the primary miRNA processing complex containing DGCR8 and DROSHA, thereby playing a role in RNA-mediated gene silencing (RNAi) by miRNAs. Binds capped RNAs (m7GpppG-capped RNA); however interaction is probably mediated via its interaction with NCBP1/CBP80 component of the CBC complex. Involved in cell cycle progression at S phase. Does not directly confer arsenite resistance but rather modulates arsenic sensitivity. Independently of its activity on miRNAs, necessary and sufficient to promote neural stem cell self-renewal. Does so by directly binding SOX2 promoter and positively regulating its transcription. The polypeptide is Serrate RNA effector molecule homolog (SRRT) (Homo sapiens (Human)).